The sequence spans 394 residues: Elongation factor Tu (394 aa).

The tr-type G domain maps to 10-205 (KPHMNVGTIG…TMDSYFDLPE (196 aa)). Positions 19 to 26 (GHVDHGKT) are G1. Residue 19 to 26 (GHVDHGKT) coordinates GTP. Threonine 26 is a binding site for Mg(2+). The G2 stretch occupies residues 61–65 (GITIN). The G3 stretch occupies residues 82 to 85 (DCPG). Residues 82-86 (DCPGH) and 137-140 (NKLD) each bind GTP. Residues 137–140 (NKLD) are G4. The G5 stretch occupies residues 173–175 (SAF).

Belongs to the TRAFAC class translation factor GTPase superfamily. Classic translation factor GTPase family. EF-Tu/EF-1A subfamily. In terms of assembly, monomer.

It localises to the cytoplasm. It carries out the reaction GTP + H2O = GDP + phosphate + H(+). Its function is as follows. GTP hydrolase that promotes the GTP-dependent binding of aminoacyl-tRNA to the A-site of ribosomes during protein biosynthesis. The chain is Elongation factor Tu from Borrelia hermsii (strain HS1 / DAH).